Here is a 166-residue protein sequence, read N- to C-terminus: Interferon gamma (166 aa).

The N-terminal stretch at 1–23 (MNYTTICLAFQLCVIFCSSGYYC) is a signal peptide. The residue at position 24 (glutamine 24) is a Pyrrolidone carboxylic acid. N-linked (GlcNAc...) asparagine glycosylation is found at asparagine 39, asparagine 106, and asparagine 107.

It belongs to the type II (or gamma) interferon family. Homodimer. Interacts with IFNGR1 (via extracellular domain); this interaction promotes IFNGR1 dimerization.

It is found in the secreted. Type II interferon produced by immune cells such as T-cells and NK cells that plays crucial roles in antimicrobial, antiviral, and antitumor responses by activating effector immune cells and enhancing antigen presentation. Primarily signals through the JAK-STAT pathway after interaction with its receptor IFNGR1 to affect gene regulation. Upon IFNG binding, IFNGR1 intracellular domain opens out to allow association of downstream signaling components JAK2, JAK1 and STAT1, leading to STAT1 activation, nuclear translocation and transcription of IFNG-regulated genes. Many of the induced genes are transcription factors such as IRF1 that are able to further drive regulation of a next wave of transcription. Plays a role in class I antigen presentation pathway by inducing a replacement of catalytic proteasome subunits with immunoproteasome subunits. In turn, increases the quantity, quality, and repertoire of peptides for class I MHC loading. Increases the efficiency of peptide generation also by inducing the expression of activator PA28 that associates with the proteasome and alters its proteolytic cleavage preference. Up-regulates as well MHC II complexes on the cell surface by promoting expression of several key molecules such as cathepsins B/CTSB, H/CTSH, and L/CTSL. Participates in the regulation of hematopoietic stem cells during development and under homeostatic conditions by affecting their development, quiescence, and differentiation. This chain is Interferon gamma (IFNG), found in Mustela putorius furo (European domestic ferret).